Reading from the N-terminus, the 100-residue chain is Ferredoxin-2 (100 aa).

The 94-residue stretch at Tyr4 to Ser97 folds into the 2Fe-2S ferredoxin-type domain. [2Fe-2S] cluster contacts are provided by Cys42, Cys47, Cys50, and Cys81.

This sequence belongs to the 2Fe2S plant-type ferredoxin family. [2Fe-2S] cluster is required as a cofactor.

Ferredoxins are iron-sulfur proteins that transfer electrons in a wide variety of metabolic reactions. In Aphanothece sacrum, this protein is Ferredoxin-2.